The sequence spans 158 residues: Putative pre-16S rRNA nuclease (158 aa).

This sequence belongs to the YqgF nuclease family.

It localises to the cytoplasm. Could be a nuclease involved in processing of the 5'-end of pre-16S rRNA. The polypeptide is Putative pre-16S rRNA nuclease (Acidiphilium cryptum (strain JF-5)).